The sequence spans 378 residues: MTNSSITAPVTDILAKARSGANLSAKEAIILLETTDNRLIAWIRETADFLRRQQTGDTVTYVINRNINFSNICEQHCSFCAFRRDEDEEGAFWLNLEEIIAKAADAVRRGATEICMQGGLNPKAKIKGNSLDYYLEIVKNLKQAFPDLHLHAFSPQEVQFIAREDGLSYEKVIASLQEAGVNSLPGTAAEVLVDEVRRVICPEKIDAATWLEIVGTAHRLGLHTTSTMLCGHIETPSQQVQHLEKIRKQQEIALENNYPAKITEFILLPFVGQSAPKPLRNRVGQDQPILADTLKLTAVARIYLGNSIKNHQPSWVKLGLQGATEALNWGCNDLGGTLMEEHITTMAGALGGTCLTVEELATAIKSLDRPARQRDTIY.

A Radical SAM core domain is found at 59–306 (VTYVINRNIN…TAVARIYLGN (248 aa)). [4Fe-4S] cluster is bound by residues cysteine 73, cysteine 77, and cysteine 80.

Belongs to the radical SAM superfamily. CofH family. Consists of two subunits, CofG and CofH. The cofactor is [4Fe-4S] cluster.

The enzyme catalyses 5-amino-6-(D-ribitylamino)uracil + L-tyrosine + S-adenosyl-L-methionine = 5-amino-5-(4-hydroxybenzyl)-6-(D-ribitylimino)-5,6-dihydrouracil + 2-iminoacetate + 5'-deoxyadenosine + L-methionine + H(+). Its pathway is cofactor biosynthesis; coenzyme F0 biosynthesis. Functionally, catalyzes the radical-mediated synthesis of 5-amino-5-(4-hydroxybenzyl)-6-(D-ribitylimino)-5,6-dihydrouracil from 5-amino-6-(D-ribitylamino)uracil and L-tyrosine. This chain is 5-amino-6-(D-ribitylamino)uracil--L-tyrosine 4-hydroxyphenyl transferase, found in Microcystis aeruginosa (strain NIES-843 / IAM M-2473).